The following is a 341-amino-acid chain: Phosphoribosylformylglycinamidine cyclo-ligase (341 aa).

This sequence belongs to the AIR synthase family.

It localises to the cytoplasm. The enzyme catalyses 2-formamido-N(1)-(5-O-phospho-beta-D-ribosyl)acetamidine + ATP = 5-amino-1-(5-phospho-beta-D-ribosyl)imidazole + ADP + phosphate + H(+). It functions in the pathway purine metabolism; IMP biosynthesis via de novo pathway; 5-amino-1-(5-phospho-D-ribosyl)imidazole from N(2)-formyl-N(1)-(5-phospho-D-ribosyl)glycinamide: step 2/2. In Xanthomonas euvesicatoria pv. vesicatoria (strain 85-10) (Xanthomonas campestris pv. vesicatoria), this protein is Phosphoribosylformylglycinamidine cyclo-ligase.